A 328-amino-acid polypeptide reads, in one-letter code: Methionyl-tRNA formyltransferase (328 aa).

110–113 (SLLP) contacts (6S)-5,6,7,8-tetrahydrofolate.

This sequence belongs to the Fmt family.

It carries out the reaction L-methionyl-tRNA(fMet) + (6R)-10-formyltetrahydrofolate = N-formyl-L-methionyl-tRNA(fMet) + (6S)-5,6,7,8-tetrahydrofolate + H(+). Functionally, attaches a formyl group to the free amino group of methionyl-tRNA(fMet). The formyl group appears to play a dual role in the initiator identity of N-formylmethionyl-tRNA by promoting its recognition by IF2 and preventing the misappropriation of this tRNA by the elongation apparatus. The chain is Methionyl-tRNA formyltransferase from Prochlorococcus marinus (strain MIT 9312).